Reading from the N-terminus, the 233-residue chain is Small ribosomal subunit protein uS3 (233 aa).

Positions 39–107 (VREFLKAKLK…PVHVNIEEVR (69 aa)) constitute a KH type-2 domain. A disordered region spans residues 209 to 233 (PGQVSAEPTQPEKKMRKGGRNAAAN).

Belongs to the universal ribosomal protein uS3 family. Part of the 30S ribosomal subunit. Forms a tight complex with proteins S10 and S14.

Functionally, binds the lower part of the 30S subunit head. Binds mRNA in the 70S ribosome, positioning it for translation. This is Small ribosomal subunit protein uS3 from Laribacter hongkongensis (strain HLHK9).